The following is a 247-amino-acid chain: Triosephosphate isomerase (247 aa).

Residues asparagine 10 and lysine 12 each coordinate substrate. Histidine 95 functions as the Electrophile in the catalytic mechanism. Catalysis depends on glutamate 165, which acts as the Proton acceptor.

The protein belongs to the triosephosphate isomerase family. As to quaternary structure, homodimer.

The catalysed reaction is D-glyceraldehyde 3-phosphate = dihydroxyacetone phosphate. The protein operates within carbohydrate biosynthesis; gluconeogenesis. It functions in the pathway carbohydrate degradation; glycolysis; D-glyceraldehyde 3-phosphate from glycerone phosphate: step 1/1. This is Triosephosphate isomerase (TPI1) from Yarrowia lipolytica (strain CLIB 122 / E 150) (Yeast).